Reading from the N-terminus, the 843-residue chain is Complement component C7 (843 aa).

A signal peptide spans Met-1 to Ala-22. One can recognise a TSP type-1 1 domain in the interval Asn-27–Pro-80. 7 disulfides stabilise this stretch: Cys-28-Cys-63, Cys-39-Cys-73, Cys-42-Cys-79, Cys-85-Cys-96, Cys-91-Cys-109, Cys-103-Cys-119, and Cys-128-Cys-165. C-linked (Man) tryptophan glycosylation occurs at Trp-36. The LDL-receptor class A domain occupies Glu-83–Asp-121. The tract at residues Gly-105–Asn-142 is disordered. A compositionally biased stretch (acidic residues) spans Ser-107–Glu-120. One can recognise an MACPF domain in the interval Ser-124 to His-456. A glycan (N-linked (GlcNAc...) asparagine) is linked at Asn-202. 21 disulfides stabilise this stretch: Cys-337–Cys-353, Cys-433–Cys-560, Cys-455–Cys-505, Cys-457–Cys-473, Cys-460–Cys-475, Cys-477–Cys-486, Cys-512–Cys-545, Cys-523–Cys-535, Cys-571–Cys-613, Cys-599–Cys-626, Cys-631–Cys-673, Cys-659–Cys-688, Cys-702–Cys-713, Cys-715–Cys-750, Cys-721–Cys-743, Cys-728–Cys-763, Cys-773–Cys-782, Cys-776–Cys-789, Cys-791–Cys-825, Cys-797–Cys-818, and Cys-805–Cys-838. An EGF-like domain is found at Cys-457–Glu-487. The region spanning Asp-500–Asp-549 is the TSP type-1 2 domain. C-linked (Man) tryptophan glycosylation is found at Trp-503, Trp-506, and Trp-509. The interval Lys-516 to Thr-539 is disordered. CCP stretches follow at residues Cys-545–Glu-615 and Asp-616–Ala-693. Sushi domains follow at residues Glu-569–Lys-628 and Ile-629–Arg-690. 2 factor I module (FIM) regions span residues Leu-695–Glu-770 and Lys-771–Pro-843. Asn-754 is a glycosylation site (N-linked (GlcNAc...) asparagine).

The protein belongs to the complement C6/C7/C8/C9 family. In terms of assembly, monomer or dimer; as a C5b-7 complex it can also form multimeric rosettes. Component of the membrane attack complex (MAC), composed of complement C5b, C6, C7, C8A, C8B, C8G and multiple copies of the pore-forming subunit C9. C-, N- and O-glycosylated. O-glycosylated with core 1 or possibly core 8 glycans. Detected in plasma (at protein level). Bone marrow, heart, intestine, lung, spleen, kidney, liver and thymus.

It is found in the secreted. The protein resides in the target cell membrane. With respect to regulation, membrane attack complex (MAC) assembly is inhibited by CD59, thereby protecting self-cells from damage during complement activation. MAC assembly is also inhibited by clusterin (CLU) chaperones that inhibit polymerization of C9. Component of the membrane attack complex (MAC), a multiprotein complex activated by the complement cascade, which inserts into a target cell membrane and forms a pore, leading to target cell membrane rupture and cell lysis. The MAC is initiated by proteolytic cleavage of C5 into complement C5b in response to the classical, alternative, lectin and GZMK complement pathways. The complement pathways consist in a cascade of proteins that leads to phagocytosis and breakdown of pathogens and signaling that strengthens the adaptive immune system. C7 serves as a membrane anchor. During MAC assembly, associates with C5b and C6 to form the C5b-7 complex, a key lipophilic precursor of the MAC complex, which associates with the outer leaflet and reduces the energy for membrane bending. This chain is Complement component C7 (C7), found in Sus scrofa (Pig).